We begin with the raw amino-acid sequence, 227 residues long: Probable GTP-binding protein EngB (227 aa).

Residues 41–216 (GRPEVAFAGR…RAEIARFAVP (176 aa)) form the EngB-type G domain. Residues 49-56 (GRSNVGKS), 76-80 (GRTKQ), 94-97 (DMPG), 161-164 (TKCD), and 195-197 (TSS) contribute to the GTP site. Ser56 and Thr78 together coordinate Mg(2+).

The protein belongs to the TRAFAC class TrmE-Era-EngA-EngB-Septin-like GTPase superfamily. EngB GTPase family. The cofactor is Mg(2+).

Necessary for normal cell division and for the maintenance of normal septation. The protein is Probable GTP-binding protein EngB of Gluconobacter oxydans (strain 621H) (Gluconobacter suboxydans).